The chain runs to 211 residues: Bcl-2-related ovarian killer protein homolog B (211 aa).

The BH4 motif lies at 32–44 (KELCRDFIHSRIT). Positions 67-83 (VSVVLLKLGDELECMRP) match the BH3 motif. The BH1 motif lies at 113 to 132 (EVIAMGITWGKVVAIYAVAA). The BH2 motif lies at 165 to 179 (WLKKRGGWVDILKCV). The helical transmembrane segment at 190–210 (WLSTAVLTWREFIKTMYVYLT) threads the bilayer.

It belongs to the Bcl-2 family. In terms of tissue distribution, expressed strongly in ovary and more weakly in eye. Little expression in other tissues examined.

The protein resides in the membrane. May play a role in apoptosis. Does not appear to show pro-apoptotic activity when expressed ectopically in early embryos. This Danio rerio (Zebrafish) protein is Bcl-2-related ovarian killer protein homolog B (bokb).